Here is a 411-residue protein sequence, read N- to C-terminus: Thyroid hormone receptor beta (411 aa).

The tract at residues 1 to 24 is disordered; the sequence is MTPNSMTENGLPAWDKPKPCPDGE. The segment at 1–104 is modulating; the sequence is MTPNSMTENG…IPSYLDKDEL (104 aa). The segment covering 15–24 has biased composition (basic and acidic residues); the sequence is DKPKPCPDGE. Zn(2+) is bound by residues cysteine 105, cysteine 108, cysteine 122, cysteine 125, cysteine 143, cysteine 149, cysteine 159, and cysteine 162. 2 consecutive NR C4-type zinc fingers follow at residues 105–125 and 143–167; these read CVVCGDKATGYHYRCITCEGC and CKYEGKCVIDKVTRNQCQECRFKKC. The segment at residues 105–179 is a DNA-binding region (nuclear receptor); the sequence is CVVCGDKATG…VGMATDLVLD (75 aa). The region spanning 215–411 is the NR LBD domain; it reads QEWELIKTVT…EHYINYRRNS (197 aa). The interval 242-411 is interaction with NR2F6; sequence KFLPEDIGQA…EHYINYRRNS (170 aa). 3,3',5-triiodo-L-thyronine-binding residues include arginine 280 and asparagine 329. Residues arginine 280 and asparagine 329 each coordinate L-thyroxine.

This sequence belongs to the nuclear hormone receptor family. NR1 subfamily. As to quaternary structure, binds DNA as a dimer; homodimer and heterodimer with RXRA. Interacts with the coactivators NCOA1/SRC1, NCOA2/GRIP1, NCOA7 and MED1/TRAP220 in a ligand-inducible manner. Interacts with the corepressor NCOR1 in absence of ligand. Interacts with C1D. Interacts with NR2F6; the interaction impairs the binding of the THRB homodimer and THRB:RXRB heterodimer to T3 response elements. Interacts with PRMT2 and THRSP. Interacts with TACC1; this interaction is decreased in the presence of thyroid hormone T3.

The protein resides in the nucleus. Its function is as follows. Nuclear hormone receptor that can act as a repressor or activator of transcription. High affinity receptor for thyroid hormones, including triiodothyronine and thyroxine. This Ovis aries (Sheep) protein is Thyroid hormone receptor beta (THRB).